Here is a 239-residue protein sequence, read N- to C-terminus: MTAPLSLFVTGTDTEIGKTFVSAAMLHGFARHGLRAAALKPVAAGAYERDGVWRNEDADQLDAAANVVLPPELRTPFLLKAPAAPHIVAAQEGVTLDIDTIVACHREALTRADVVVVEGVGGFRVPLTDTQDTADLAVALGLPVVLVVGVRLGCISHALLTADAIRQRGLTLAGWVANHVDPAMSYADENVATIRDWLAREHGAPLLGRIPHMSPAAAESAAAMLDIAALVETLRAAQH.

15–20 (EIGKTF) contributes to the ATP binding site. Mg(2+) is bound at residue Thr-19. Lys-40 is an active-site residue. ATP contacts are provided by residues Asp-57, 118–121 (EGVG), and 178–179 (NH). Residues Asp-57 and Glu-118 each coordinate Mg(2+).

This sequence belongs to the dethiobiotin synthetase family. In terms of assembly, homodimer. Mg(2+) serves as cofactor.

It localises to the cytoplasm. It carries out the reaction (7R,8S)-7,8-diammoniononanoate + CO2 + ATP = (4R,5S)-dethiobiotin + ADP + phosphate + 3 H(+). It participates in cofactor biosynthesis; biotin biosynthesis; biotin from 7,8-diaminononanoate: step 1/2. Functionally, catalyzes a mechanistically unusual reaction, the ATP-dependent insertion of CO2 between the N7 and N8 nitrogen atoms of 7,8-diaminopelargonic acid (DAPA, also called 7,8-diammoniononanoate) to form a ureido ring. This chain is ATP-dependent dethiobiotin synthetase BioD, found in Burkholderia ambifaria (strain ATCC BAA-244 / DSM 16087 / CCUG 44356 / LMG 19182 / AMMD) (Burkholderia cepacia (strain AMMD)).